The primary structure comprises 200 residues: Golgi to ER traffic protein 1 (200 aa).

The Lumenal segment spans residues 1-6 (MEPYTL). Residues 7–26 (LLFIFVIQIVKQIISAVGKQ) form a helical membrane-spanning segment. The Cytoplasmic segment spans residues 27–113 (SIESISWVLY…KVNTFTGYLI (87 aa)). The stretch at 75–107 (AKWTKLNRQHDKLVAEIEQLQKEVDLDKVKVNT) forms a coiled coil. A helical transmembrane segment spans residues 114 to 134 (AILTSIPIWFFRVWYRSVVLF). Over 135–158 (YFPPGILPRALEWSIALPFTVTGG) the chain is Lumenal. The helical transmembrane segment at 159–175 (VSLTVWMMAAGAVASSL) threads the bilayer. Over 176–200 (TFLFMFPFEKAVPKPVLAKKSPQQL) the chain is Cytoplasmic.

The protein belongs to the WRB/GET1 family. Component of the Golgi to ER traffic (GET) complex, which is composed of GET1, GET2 and GET3. Within the complex, GET1 and GET2 form a heterotetramer which is stabilized by phosphatidylinositol binding and which binds to the GET3 homodimer.

It localises to the endoplasmic reticulum membrane. It is found in the golgi apparatus membrane. Functionally, required for the post-translational delivery of tail-anchored (TA) proteins to the endoplasmic reticulum. Together with GET2, acts as a membrane receptor for soluble GET3, which recognizes and selectively binds the transmembrane domain of TA proteins in the cytosol. The GET complex cooperates with the HDEL receptor ERD2 to mediate the ATP-dependent retrieval of resident ER proteins that contain a C-terminal H-D-E-L retention signal from the Golgi to the ER. The chain is Golgi to ER traffic protein 1 from Meyerozyma guilliermondii (strain ATCC 6260 / CBS 566 / DSM 6381 / JCM 1539 / NBRC 10279 / NRRL Y-324) (Yeast).